A 137-amino-acid chain; its full sequence is Probable 4-amino-4-deoxy-L-arabinose-phosphoundecaprenol flippase subunit ArnF (137 aa).

Over Met1 to Arg5 the chain is Cytoplasmic. Residues Gly6 to Trp26 traverse the membrane as a helical segment. Topologically, residues Gly27 to His44 are periplasmic. The chain crosses the membrane as a helical span at residues Ala45 to Leu65. Over Ala66–Ala76 the chain is Cytoplasmic. The chain crosses the membrane as a helical span at residues Tyr77–Phe97. The Periplasmic segment spans residues Glu98–Thr100. A helical membrane pass occupies residues Phe101 to Ala121. Residues Arg122–Leu137 are Cytoplasmic-facing.

The protein belongs to the ArnF family. As to quaternary structure, heterodimer of ArnE and ArnF.

The protein localises to the cell inner membrane. Its pathway is bacterial outer membrane biogenesis; lipopolysaccharide biosynthesis. Functionally, translocates 4-amino-4-deoxy-L-arabinose-phosphoundecaprenol (alpha-L-Ara4N-phosphoundecaprenol) from the cytoplasmic to the periplasmic side of the inner membrane. This chain is Probable 4-amino-4-deoxy-L-arabinose-phosphoundecaprenol flippase subunit ArnF, found in Pseudomonas paraeruginosa (strain DSM 24068 / PA7) (Pseudomonas aeruginosa (strain PA7)).